The chain runs to 309 residues: Ribosomal RNA large subunit methyltransferase F (309 aa).

The tract at residues 1–21 (MASQHDKKSVQSGLLHPRNPH) is disordered.

It belongs to the methyltransferase superfamily. METTL16/RlmF family.

The protein resides in the cytoplasm. It carries out the reaction adenosine(1618) in 23S rRNA + S-adenosyl-L-methionine = N(6)-methyladenosine(1618) in 23S rRNA + S-adenosyl-L-homocysteine + H(+). Functionally, specifically methylates the adenine in position 1618 of 23S rRNA. The chain is Ribosomal RNA large subunit methyltransferase F from Desulfotalea psychrophila (strain LSv54 / DSM 12343).